The primary structure comprises 318 residues: 4-hydroxy-3-methylbut-2-enyl diphosphate reductase (318 aa).

Cysteine 12 lines the [4Fe-4S] cluster pocket. Positions 41 and 74 each coordinate (2E)-4-hydroxy-3-methylbut-2-enyl diphosphate. The dimethylallyl diphosphate site is built by histidine 41 and histidine 74. Residues histidine 41 and histidine 74 each coordinate isopentenyl diphosphate. Residue cysteine 96 coordinates [4Fe-4S] cluster. A (2E)-4-hydroxy-3-methylbut-2-enyl diphosphate-binding site is contributed by histidine 124. Histidine 124 is a dimethylallyl diphosphate binding site. Histidine 124 is an isopentenyl diphosphate binding site. Glutamate 126 (proton donor) is an active-site residue. Threonine 167 provides a ligand contact to (2E)-4-hydroxy-3-methylbut-2-enyl diphosphate. [4Fe-4S] cluster is bound at residue cysteine 197. Serine 225, serine 226, asparagine 227, and serine 269 together coordinate (2E)-4-hydroxy-3-methylbut-2-enyl diphosphate. Serine 225, serine 226, asparagine 227, and serine 269 together coordinate dimethylallyl diphosphate. 4 residues coordinate isopentenyl diphosphate: serine 225, serine 226, asparagine 227, and serine 269.

Belongs to the IspH family. Requires [4Fe-4S] cluster as cofactor.

The catalysed reaction is isopentenyl diphosphate + 2 oxidized [2Fe-2S]-[ferredoxin] + H2O = (2E)-4-hydroxy-3-methylbut-2-enyl diphosphate + 2 reduced [2Fe-2S]-[ferredoxin] + 2 H(+). It carries out the reaction dimethylallyl diphosphate + 2 oxidized [2Fe-2S]-[ferredoxin] + H2O = (2E)-4-hydroxy-3-methylbut-2-enyl diphosphate + 2 reduced [2Fe-2S]-[ferredoxin] + 2 H(+). Its pathway is isoprenoid biosynthesis; dimethylallyl diphosphate biosynthesis; dimethylallyl diphosphate from (2E)-4-hydroxy-3-methylbutenyl diphosphate: step 1/1. It functions in the pathway isoprenoid biosynthesis; isopentenyl diphosphate biosynthesis via DXP pathway; isopentenyl diphosphate from 1-deoxy-D-xylulose 5-phosphate: step 6/6. In terms of biological role, catalyzes the conversion of 1-hydroxy-2-methyl-2-(E)-butenyl 4-diphosphate (HMBPP) into a mixture of isopentenyl diphosphate (IPP) and dimethylallyl diphosphate (DMAPP). Acts in the terminal step of the DOXP/MEP pathway for isoprenoid precursor biosynthesis. In Francisella tularensis subsp. mediasiatica (strain FSC147), this protein is 4-hydroxy-3-methylbut-2-enyl diphosphate reductase.